We begin with the raw amino-acid sequence, 299 residues long: Probable lipid kinase YegS (299 aa).

The region spanning 2 to 133 (AEFPASLLIL…IDMAQVNKQT (132 aa)) is the DAGKc domain. Residues T40, 66 to 72 (GDGTINE), and T95 contribute to the ATP site. 3 residues coordinate Mg(2+): L215, D218, and L220. The Proton acceptor role is filled by E271.

This sequence belongs to the diacylglycerol/lipid kinase family. YegS lipid kinase subfamily. Mg(2+) is required as a cofactor. The cofactor is Ca(2+).

It localises to the cytoplasm. Probably phosphorylates lipids; the in vivo substrate is unknown. The protein is Probable lipid kinase YegS of Escherichia coli O127:H6 (strain E2348/69 / EPEC).